The chain runs to 456 residues: tRNA modification GTPase MnmE (456 aa).

Residues R24, E81, and K120 each coordinate (6S)-5-formyl-5,6,7,8-tetrahydrofolate. Residues 216–379 form the TrmE-type G domain; it reads GMTVVIAGRP…LRDHLKACMG (164 aa). K(+) is bound at residue N226. Residues 226-231, 245-251, 270-273, and 335-338 each bind GTP; these read NAGKSS, TDIAGTT, DTAG, and NKAD. Mg(2+) is bound at residue S230. Residues T245, I247, and T250 each coordinate K(+). T251 provides a ligand contact to Mg(2+). K456 is a binding site for (6S)-5-formyl-5,6,7,8-tetrahydrofolate.

This sequence belongs to the TRAFAC class TrmE-Era-EngA-EngB-Septin-like GTPase superfamily. TrmE GTPase family. As to quaternary structure, homodimer. Heterotetramer of two MnmE and two MnmG subunits. K(+) serves as cofactor.

It localises to the cytoplasm. Functionally, exhibits a very high intrinsic GTPase hydrolysis rate. Involved in the addition of a carboxymethylaminomethyl (cmnm) group at the wobble position (U34) of certain tRNAs, forming tRNA-cmnm(5)s(2)U34. This is tRNA modification GTPase MnmE from Pseudomonas fluorescens (strain ATCC BAA-477 / NRRL B-23932 / Pf-5).